Here is a 661-residue protein sequence, read N- to C-terminus: Pseudouridylate synthase 7 homolog (661 aa).

Position 1 is an N-acetylmethionine (M1). The interval 1–97 is disordered; sequence MEMTEMTGVS…GLSEECEEEE (97 aa). The residue at position 10 (S10) is a Phosphoserine. The segment covering 36–52 has biased composition (polar residues); that stretch reads SECSLTKGQDGLQNDFL. Residues 77 to 97 show a composition bias toward acidic residues; the sequence is QLEDEEEEEEDGLSEECEEEE. The residue at position 127 (S127) is a Phosphoserine. The Nucleophile role is filled by D294. The TRUD domain maps to 370-580; that stretch reads GFINYYGMQR…SGAYRKIIIR (211 aa). The residue at position 610 (T610) is a Phosphothreonine.

The protein belongs to the pseudouridine synthase TruD family. Interacts with SIRT1.

It is found in the nucleus. The catalysed reaction is a uridine in tRNA = a pseudouridine in tRNA. The enzyme catalyses uridine(13) in tRNA = pseudouridine(13) in tRNA. It carries out the reaction a uridine in mRNA = a pseudouridine in mRNA. Pseudouridylate synthase that catalyzes pseudouridylation of RNAs. Acts as a regulator of protein synthesis in embryonic stem cells by mediating pseudouridylation of RNA fragments derived from tRNAs (tRFs): pseudouridylated tRFs inhibit translation by targeting the translation initiation complex. Also catalyzes pseudouridylation of mRNAs: mediates pseudouridylation of mRNAs with the consensus sequence 5'-UGUAG-3'. Acts as a regulator of pre-mRNA splicing by mediating pseudouridylation of pre-mRNAs at locations associated with alternatively spliced regions. Pseudouridylation of pre-mRNAs near splice sites directly regulates mRNA splicing and mRNA 3'-end processing. In addition to mRNAs and tRNAs, binds other types of RNAs, such as snRNAs, Y RNAs and vault RNAs, suggesting that it can catalyze pseudouridylation of many RNA types. This chain is Pseudouridylate synthase 7 homolog, found in Homo sapiens (Human).